The primary structure comprises 80 residues: Putative defensin-like protein 28 (80 aa).

A signal peptide spans 1–22 (MLRANVVVSLVIFAALMQCMNG).

The protein belongs to the DEFL family.

The protein localises to the secreted. The protein is Putative defensin-like protein 28 of Arabidopsis thaliana (Mouse-ear cress).